The chain runs to 302 residues: Deoxyhypusine hydroxylase-B (302 aa).

5 HEAT-like PBS-type repeats span residues 49 to 75 (LAHE…VLKD), 82 to 108 (VRHE…SLAV), 171 to 200 (MYER…LGVK), 204 to 230 (LRHE…VLKN), and 237 to 263 (VRHE…FAKD). Fe cation-binding residues include H51, E52, H84, and E85. Fe cation is bound by residues H206, E207, H239, and E240.

The protein belongs to the deoxyhypusine hydroxylase family. Fe(2+) is required as a cofactor.

It catalyses the reaction [eIF5A protein]-deoxyhypusine + AH2 + O2 = [eIF5A protein]-hypusine + A + H2O. It participates in protein modification; eIF5A hypusination. In terms of biological role, catalyzes the hydroxylation of the N(6)-(4-aminobutyl)-L-lysine intermediate to form hypusine, an essential post-translational modification only found in mature eIF-5A factor. This is Deoxyhypusine hydroxylase-B from Oryza sativa subsp. japonica (Rice).